The sequence spans 435 residues: Glutamyl-tRNA reductase (435 aa).

Residues 49–52 (TCNR), S118, 123–125 (EPQ), and Q129 each bind substrate. The active-site Nucleophile is the C50. Residue 203-208 (GAGETI) coordinates NADP(+).

It belongs to the glutamyl-tRNA reductase family. As to quaternary structure, homodimer.

The enzyme catalyses (S)-4-amino-5-oxopentanoate + tRNA(Glu) + NADP(+) = L-glutamyl-tRNA(Glu) + NADPH + H(+). The protein operates within porphyrin-containing compound metabolism; protoporphyrin-IX biosynthesis; 5-aminolevulinate from L-glutamyl-tRNA(Glu): step 1/2. Catalyzes the NADPH-dependent reduction of glutamyl-tRNA(Glu) to glutamate 1-semialdehyde (GSA). The sequence is that of Glutamyl-tRNA reductase from Glaesserella parasuis serovar 5 (strain SH0165) (Haemophilus parasuis).